The chain runs to 81 residues: ATP synthase subunit c (81 aa).

2 helical membrane passes run 7–27 and 57–77; these read AASV…PGIG and LAFM…LLFA.

This sequence belongs to the ATPase C chain family. In terms of assembly, F-type ATPases have 2 components, F(1) - the catalytic core - and F(0) - the membrane proton channel. F(1) has five subunits: alpha(3), beta(3), gamma(1), delta(1), epsilon(1). F(0) has four main subunits: a(1), b(1), b'(1) and c(10-14). The alpha and beta chains form an alternating ring which encloses part of the gamma chain. F(1) is attached to F(0) by a central stalk formed by the gamma and epsilon chains, while a peripheral stalk is formed by the delta, b and b' chains.

It localises to the cellular thylakoid membrane. Its function is as follows. F(1)F(0) ATP synthase produces ATP from ADP in the presence of a proton or sodium gradient. F-type ATPases consist of two structural domains, F(1) containing the extramembraneous catalytic core and F(0) containing the membrane proton channel, linked together by a central stalk and a peripheral stalk. During catalysis, ATP synthesis in the catalytic domain of F(1) is coupled via a rotary mechanism of the central stalk subunits to proton translocation. Key component of the F(0) channel; it plays a direct role in translocation across the membrane. A homomeric c-ring of between 10-14 subunits forms the central stalk rotor element with the F(1) delta and epsilon subunits. This is ATP synthase subunit c from Nostoc sp. (strain PCC 7120 / SAG 25.82 / UTEX 2576).